Consider the following 284-residue polypeptide: Homeobox protein SIX1 (284 aa).

Positions Gly124 to Glu183 form a DNA-binding region, homeobox. The interval Val168–Leu271 is disordered. A compositionally biased stretch (basic and acidic residues) spans Asp179–Thr190. A compositionally biased stretch (polar residues) spans Arg242–Leu271.

This sequence belongs to the SIX/Sine oculis homeobox family. In terms of assembly, interacts with DACH1. Interacts with EYA1. Interacts with EYA2. Interacts with CDH1. Interacts with TBX18. Interacts with CEBPA. Interacts with CEBPB. Interacts with EBF2. Phosphorylated during interphase; becomes hyperphosphorylated during mitosis. Hyperphosphorylation impairs binding to promoter elements. In terms of processing, ubiquitinated by the anaphase promoting complex (APC), leading to its proteasomal degradation.

It is found in the nucleus. Its subcellular location is the cytoplasm. In terms of biological role, transcription factor that is involved in the regulation of cell proliferation, apoptosis and embryonic development. Plays an important role in the development of several organs, including kidney, muscle and inner ear. Depending on context, functions as a transcriptional repressor or activator. Lacks an activation domain, and requires interaction with EYA family members for transcription activation. Mediates nuclear translocation of EYA1 and EYA2. Binds the 5'-TCA[AG][AG]TTNC-3' motif present in the MEF3 element in the MYOG promoter and CIDEA enhancer. Regulates the expression of numerous genes, including MYC, CCNA1, CCND1 and EZR. Acts as an activator of the IGFBP5 promoter, probably coactivated by EYA2. Repression of precursor cell proliferation in myoblasts is switched to activation through recruitment of EYA3 to the SIX1-DACH1 complex. During myogenesis, seems to act together with EYA2 and DACH2. Regulates the expression of CCNA1. Promotes brown adipocyte differentiation. The polypeptide is Homeobox protein SIX1 (SIX1) (Lagothrix lagotricha (Brown woolly monkey)).